We begin with the raw amino-acid sequence, 126 residues long: Penton protein P31 (126 aa).

It is found in the virion. In terms of biological role, in association with P2 and trimeric P5, forms the spike complexes located at the 5-fold vertices of the capsid. Essential for viral infectivity. This is Penton protein P31 (XXXI) from Acinetobacter calcoaceticus (Arthrobacter siderocapsulatus).